The sequence spans 86 residues: Large ribosomal subunit protein bL31B (86 aa).

The protein belongs to the bacterial ribosomal protein bL31 family. Type B subfamily. Part of the 50S ribosomal subunit.

This chain is Large ribosomal subunit protein bL31B, found in Burkholderia lata (strain ATCC 17760 / DSM 23089 / LMG 22485 / NCIMB 9086 / R18194 / 383).